Reading from the N-terminus, the 377-residue chain is Opsin-1 (377 aa).

At 1–58 (MDPGPGLAALQAWAAKSPAYGAANQTVVDKVPPDMMHMIDPHWYQFPPMNPLWHALLG) the chain is on the extracellular side. The N-linked (GlcNAc...) asparagine glycan is linked to N24. Residues 59–79 (FTIGVLGFVSISGNGMVIYIF) form a helical membrane-spanning segment. At 80-92 (MSTKSLKTPSNLL) the chain is on the cytoplasmic side. Residues 93-113 (VVNLAFSDFLMMCAMSPAMVV) traverse the membrane as a helical segment. Over 114–129 (NCYYETWVWGPFACEL) the chain is Extracellular. C127 and C204 are disulfide-bonded. Residues 130–150 (YACAGSLFGCASIWTMTMIAF) traverse the membrane as a helical segment. The Cytoplasmic portion of the chain corresponds to 151 to 169 (DRYNVIVKGIAAKPMTSNG). A helical transmembrane segment spans residues 170 to 190 (ALLRILGIWVFSLAWTLLPFF). At 191 to 220 (GWNRYVPEGNMTACGTDYLSKSWVSRSYIL) the chain is on the extracellular side. N200 is a glycosylation site (N-linked (GlcNAc...) asparagine). Residues 221-241 (IYSVFVYFLPLLLIIYSYFFI) form a helical membrane-spanning segment. Residues 242 to 280 (VQAVAAHEKAMREQAKKMNVASLRSSEAANTSAECKLAK) lie on the Cytoplasmic side of the membrane. The helical transmembrane segment at 281-301 (VALMTISLWFMAWTPYLVINY) threads the bilayer. The Extracellular portion of the chain corresponds to 302–312 (TGVFESAPISP). A helical membrane pass occupies residues 313–335 (LATIWGSLFAKANAVYNPIVYGI). The Cytoplasmic portion of the chain corresponds to 336 to 377 (SHPKYQAALYAKFPSLQCQSAPEDAGSVASGTTAVSEEKPAA). The segment at 357-377 (PEDAGSVASGTTAVSEEKPAA) is disordered.

This sequence belongs to the G-protein coupled receptor 1 family. Opsin subfamily. As to expression, in the retina, expression is abundant and uniform in the anterior-posterior and oblique cells of the retinulae, with some expression in the proximal cells. There is no expression in the dorsal rim retinulae (at protein level).

The protein localises to the cell projection. It is found in the rhabdomere membrane. Functionally, visual pigments are the light-absorbing molecules that mediate vision. They consist of an apoprotein, opsin, covalently linked to cis-retinal. May play a role in photoperiodic photoreception. This is Opsin-1 (OP1) from Manduca sexta (Tobacco hawkmoth).